A 981-amino-acid polypeptide reads, in one-letter code: Amidohydrolase tasK (981 aa).

Residues 1 to 36 are disordered; the sequence is MDDQKGPLPPYTPTATAPPPASMRQRRPPGRRRALR. Residues 7–21 show a composition bias toward pro residues; the sequence is PLPPYTPTATAPPPA. The segment covering 24–36 has biased composition (basic residues); that stretch reads RQRRPPGRRRALR. The helical transmembrane segment at 40–57 threads the bilayer; sequence TVRVLALACLAFVVLAQW. The interval 86 to 107 is disordered; that stretch reads LRVRPQDPAGPGRSKNDRYLDG. 2 residues coordinate Fe(2+): His-187 and His-189. 2 residues coordinate Zn(2+): His-187 and His-189. N-linked (GlcNAc...) asparagine glycosylation is present at Asn-407. The tract at residues 819–838 is disordered; the sequence is KKQQKQQQQQQQQQQQQHGT. Over residues 823-835 the composition is skewed to low complexity; sequence KQQQQQQQQQQQQ. A glycan (N-linked (GlcNAc...) asparagine) is linked at Asn-891.

This sequence belongs to the metallo-dependent hydrolases superfamily. Fe(2+) is required as a cofactor. Mn(2+) serves as cofactor. Requires Zn(2+) as cofactor.

The protein resides in the membrane. In terms of biological role, amidohydrolase; part of the gene cluster that mediates the biosynthesis of the tetramic acids Sch210971 and Sch210972, potential anti-HIV fungal natural product that contain a decalin core. The PKS module of tasS together with the enoylreductase tasC catalyze the formation of the polyketide unit which is then conjugated to 4-hydroxyl-4-methyl glutamate (HMG) by the condensation domain of the tasS NRPS module. One unique structural feature of Sch210971 and Sch210972 is the tetramic acid motif proposed to be derived from the non-proteinogenic amino acid HMG, by a Dieckmann-type condensation catalyzed by the reductase domain of tasS. The aldolase tasA catalyzes the aldol condensation of 2 molecules of pyruvic acid to yield the intermediate 4-hydroxyl-4-methyl-2-oxoglutarate (HMOG), which can then be stereoselectively transaminated, may be by tasG, to form HMG. The Diels-Alderase tas3 then uses the Dieckmann product of tasS as substrate and catalyzes the Diels-Alder cycloaddition to form the decalin ring of Sch210971 and Sch210972. The protein is Amidohydrolase tasK of Hapsidospora irregularis.